A 416-amino-acid chain; its full sequence is Antigen EG13 (416 aa).

The 247-residue stretch at 1 to 247 (MIQERADIEK…TVAKVDADAD (247 aa)) folds into the F-BAR domain. A disordered region spans residues 297 to 327 (LKTFTSPDRGGPIPGTTDSGSNISTSPVHTT). Residues 312 to 327 (TTDSGSNISTSPVHTT) show a composition bias toward polar residues. The region spanning 361-416 (RPGVPIRALYDYVGVEADELSFNSGDLFEKLEDEDEQGWCKGRKDGRVGLYPRQLR) is the SH3 domain.

This Echinococcus granulosus (Hydatid tapeworm) protein is Antigen EG13 (EG13).